A 225-amino-acid polypeptide reads, in one-letter code: Small ribosomal subunit protein uS2 (225 aa).

This sequence belongs to the universal ribosomal protein uS2 family.

The protein is Small ribosomal subunit protein uS2 of Metallosphaera sedula (strain ATCC 51363 / DSM 5348 / JCM 9185 / NBRC 15509 / TH2).